The sequence spans 211 residues: Dual specificity protein phosphatase 26 (211 aa).

The Tyrosine-protein phosphatase domain maps to 60-207 (NHADEVWPGL…LLALDRRLRQ (148 aa)). Residue cysteine 152 is the Phosphocysteine intermediate of the active site.

This sequence belongs to the protein-tyrosine phosphatase family. Non-receptor class dual specificity subfamily. As to quaternary structure, interacts with HSF4. Brain and skeletal muscle. In the brain it is expressed ubiquitously except in the hippocampus.

The protein localises to the cytoplasm. Its subcellular location is the nucleus. It localises to the golgi apparatus. The enzyme catalyses O-phospho-L-tyrosyl-[protein] + H2O = L-tyrosyl-[protein] + phosphate. It carries out the reaction O-phospho-L-seryl-[protein] + H2O = L-seryl-[protein] + phosphate. The catalysed reaction is O-phospho-L-threonyl-[protein] + H2O = L-threonyl-[protein] + phosphate. Its function is as follows. Inactivates MAPK1 and MAPK3 which leads to dephosphorylation of heat shock factor protein 4 and a reduction in its DNA-binding activity. In Mus musculus (Mouse), this protein is Dual specificity protein phosphatase 26 (Dusp26).